A 404-amino-acid chain; its full sequence is MQQVKKVVLAYSGGVDTSVCIPYLKKEYGISEVITFVADLGQGEDLELIRQKALNSGASQSIVGNLVNSFVERYAFPAIRANALYLDKYPLSTALARPLIAENLVNIAREFSADAVAHGCTGKGNDQVRFDLAINALGPDLKIITPAREWNMSREEAIIYGEKFGIPAPVSKKSPYSIDVNLLGRSIEAGILEDPMQEAPEDIFAMTSSIDNSPDSPLDIEIIFKNGFPVGINDEFLTPVEIIKKANVLAGEHGYGRIDMIEDRVVGIKSREIYETPGLLLLIKAHKELESITLNPDIVDFKGIVEKKWGQIVYQGFWFGPLKDSLDAFISSTQTSVNGRVKIRLYKGNAIVIGRMSENNSLYRDDLATYSKDDVFKHSLAEGFIYMWGMSNKIWAELNSKTTD.

ATP-binding positions include Ala10–Ser18 and Ala38. Residue Tyr89 coordinates L-citrulline. An ATP-binding site is contributed by Gly119. The L-aspartate site is built by Thr121, Asn125, and Asp126. Asn125 lines the L-citrulline pocket. 5 residues coordinate L-citrulline: Arg129, Ser177, Ser186, Glu262, and Tyr274.

It belongs to the argininosuccinate synthase family. Type 1 subfamily. As to quaternary structure, homotetramer.

It is found in the cytoplasm. The catalysed reaction is L-citrulline + L-aspartate + ATP = 2-(N(omega)-L-arginino)succinate + AMP + diphosphate + H(+). It participates in amino-acid biosynthesis; L-arginine biosynthesis; L-arginine from L-ornithine and carbamoyl phosphate: step 2/3. This is Argininosuccinate synthase from Prochlorococcus marinus (strain MIT 9215).